The primary structure comprises 190 residues: Glutamyl-tRNA(Gln) amidotransferase subunit F, mitochondrial (190 aa).

Belongs to the GatF family. As to quaternary structure, subunit of the heterotrimeric GatFAB amidotransferase (AdT) complex, composed of A, B and F subunits.

It localises to the mitochondrion inner membrane. It catalyses the reaction L-glutamyl-tRNA(Gln) + L-glutamine + ATP + H2O = L-glutaminyl-tRNA(Gln) + L-glutamate + ADP + phosphate + H(+). In terms of biological role, allows the formation of correctly charged Gln-tRNA(Gln) through the transamidation of misacylated Glu-tRNA(Gln) in the mitochondria. The reaction takes place in the presence of glutamine and ATP through an activated gamma-phospho-Glu-tRNA(Gln). Required for proper protein synthesis within the mitochondrion. This Eremothecium gossypii (strain ATCC 10895 / CBS 109.51 / FGSC 9923 / NRRL Y-1056) (Yeast) protein is Glutamyl-tRNA(Gln) amidotransferase subunit F, mitochondrial.